We begin with the raw amino-acid sequence, 141 residues long: Hemoglobin subunit alpha (141 aa).

The region spanning 1-141 (VLSDNDKTNV…VSTVLTSKYR (141 aa)) is the Globin domain. S3 is modified (phosphoserine). K7 bears the N6-succinyllysine mark. T8 is subject to Phosphothreonine. Residue K11 is modified to N6-succinyllysine. N6-acetyllysine; alternate is present on K16. K16 is modified (N6-succinyllysine; alternate). Phosphotyrosine is present on Y24. S35 is modified (phosphoserine). Residue K40 is modified to N6-succinyllysine. H58 contacts O2. A heme b-binding site is contributed by H87. Residue S102 is modified to Phosphoserine. A Phosphothreonine modification is found at T108. S124 is subject to Phosphoserine. 2 positions are modified to phosphothreonine: T134 and T137. At S138 the chain carries Phosphoserine.

The protein belongs to the globin family. In terms of assembly, heterotetramer of two alpha chains and two beta chains. As to expression, red blood cells.

Involved in oxygen transport from the lung to the various peripheral tissues. In terms of biological role, hemopressin acts as an antagonist peptide of the cannabinoid receptor CNR1. Hemopressin-binding efficiently blocks cannabinoid receptor CNR1 and subsequent signaling. The chain is Hemoglobin subunit alpha (HBA) from Loxodonta africana (African elephant).